The chain runs to 971 residues: Polyamine-modulated factor 1-binding protein 1 (971 aa).

Coiled coils occupy residues 37–69, 117–229, 282–325, 355–680, 706–827, and 879–916; these read NKQY…LQAS, EKLH…ACSN, LHVE…LREE, QKLS…SAIQ, QDDL…DEKE, and IAKL…KAGT.

Expressed in testis and more specifically in ODF, the sperm tail specific cytoskeletal structure. Also expressed in epididymides and brain.

The protein localises to the cell projection. It localises to the cilium. It is found in the flagellum. In terms of biological role, required for normal spermatogenesis. It functions as a scaffold protein that attaches the sperm head-tail connecting piece to the nuclear envelope, thus maintaining sperm head and tail integrity. May also be involved in the general organization of cellular cytoskeleton. This Rattus norvegicus (Rat) protein is Polyamine-modulated factor 1-binding protein 1 (Pmfbp1).